The primary structure comprises 307 residues: Mitochondrial brown fat uncoupling protein 1 (307 aa).

Topologically, residues 1-10 (MVSSTTSEVQ) are mitochondrial intermembrane. Residues 11–32 (PTMGVKIFSAGVSACLADIITF) form a helical membrane-spanning segment. Solcar repeat units lie at residues 11–102 (PTMG…VQEY), 111–201 (ASLG…MKGA), and 210–295 (DDVP…LKKE). Residues 33–73 (PLDTAKVRLQIQGEGQASSTIRYKGVLGTITTLAKTEGLPK) lie on the Mitochondrial matrix side of the membrane. Lysine 56 lines the fatty acid 16:0 pocket. The helical transmembrane segment at 74–96 (LYSGLPAGIQRQISFASLRIGLY) threads the bilayer. Residues 97–116 (DTVQEYFSSGRETPASLGSK) are Mitochondrial intermembrane-facing. A helical transmembrane segment spans residues 117–133 (ISAGLMTGGVAVFIGQP). Over 134–178 (TEVVKVRMQAQSHLHGIKPRYTGTYNAYRVIATTESLSTLWKGTT) the chain is Mitochondrial matrix. The helical transmembrane segment at 179–195 (PNLMRNVIINCTELVTY) threads the bilayer. Topologically, residues 196–212 (DLMKGALVNHHILADDV) are mitochondrial intermembrane. The chain crosses the membrane as a helical span at residues 213–232 (PCHLLSALVAGFCTTLLASP). At 233-266 (VDVVKTRFINSLPGQYPSVPSCAMTMYTKEGPAA) the chain is on the mitochondrial matrix side. Cysteine sulfenic acid (-SOH) is present on cysteine 254. Residues 267 to 289 (FFKGFAPSFLRLGSWNVIMFVCF) form a helical membrane-spanning segment. Lysine 269 serves as a coordination point for fatty acid 16:0. Over 290 to 307 (EQLKKELMKSRQTVDCTT) the chain is Mitochondrial intermembrane.

This sequence belongs to the mitochondrial carrier (TC 2.A.29) family. Most probably functions as a monomer. Binds one purine nucleotide per monomer. However, has also been suggested to function as a homodimer or a homotetramer. Tightly associates with cardiolipin in the mitochondrion inner membrane; may stabilize and regulate its activity. May undergo ubiquitin-mediated proteasomal degradation. Post-translationally, may undergo sulfenylation upon cold exposure. May increase the sensitivity of UCP1 thermogenic function to the activation by noradrenaline probably through structural effects. In terms of tissue distribution, brown adipose tissue.

The protein localises to the mitochondrion inner membrane. It catalyses the reaction H(+)(in) = H(+)(out). With respect to regulation, has no constitutive proton transporter activity and has to be activated by long-chain fatty acids/LCFAs. Inhibited by purine nucleotides. Both purine nucleotides and LCFAs bind the cytosolic side of the transporter and directly compete to activate or inhibit it. Activated by noradrenaline and reactive oxygen species. Despite lacking canonical translational encoding for selenocysteine, a small pool of the protein has been observed to selectively incorporate selenocysteine at 'Cys-254'. Selenocysteine-modified protein is highly sensitive to redox modification and may constitute a pool of protein highly sensitive to activation by elevated levels of reactive oxygen species (ROS). Functionally, mitochondrial protein responsible for thermogenic respiration, a specialized capacity of brown adipose tissue and beige fat that participates in non-shivering adaptive thermogenesis to temperature and diet variations and more generally to the regulation of energy balance. Functions as a long-chain fatty acid/LCFA and proton symporter, simultaneously transporting one LCFA and one proton through the inner mitochondrial membrane. However, LCFAs remaining associated with the transporter via their hydrophobic tails, it results in an apparent transport of protons activated by LCFAs. Thereby, dissipates the mitochondrial proton gradient and converts the energy of substrate oxydation into heat instead of ATP. Regulates the production of reactive oxygen species/ROS by mitochondria. The sequence is that of Mitochondrial brown fat uncoupling protein 1 from Rattus norvegicus (Rat).